Here is an 82-residue protein sequence, read N- to C-terminus: Small ribosomal subunit protein bS16c (82 aa).

Belongs to the bacterial ribosomal protein bS16 family.

It localises to the plastid. The protein resides in the chloroplast. In Pyropia yezoensis (Susabi-nori), this protein is Small ribosomal subunit protein bS16c.